A 396-amino-acid polypeptide reads, in one-letter code: Cathepsin D (396 aa).

An N-terminal signal peptide occupies residues methionine 1 to alanine 18. Positions isoleucine 19–asparagine 61 are cleaved as a propeptide — activation peptide. Positions tyrosine 76–alanine 393 constitute a Peptidase A1 domain. Residue aspartate 94 is part of the active site. Cysteine 107 and cysteine 114 are joined by a disulfide. Asparagine 131 is a glycosylation site (N-linked (GlcNAc...) asparagine). A disulfide bridge connects residues cysteine 272 and cysteine 276. The active site involves aspartate 281. An intrachain disulfide couples cysteine 315 to cysteine 352.

It belongs to the peptidase A1 family. As to quaternary structure, monomer.

The protein resides in the lysosome. The catalysed reaction is Specificity similar to, but narrower than, that of pepsin A. Does not cleave the 4-Gln-|-His-5 bond in B chain of insulin.. Inhibited by pepstatin. In terms of biological role, acid protease active in intracellular protein breakdown. The chain is Cathepsin D (ctsd) from Clupea harengus (Atlantic herring).